The chain runs to 255 residues: MNPIKPPFTLNQYFAAWFVHVFTASAACIGVFSLYKIYQHDYVFALWLMAITVFIDAVDGSLARLVHVKSVLPKIDGALLDNIVDYLNYVITPCFFLLVKPGMLPADYVVPITAAITITSAYQFCQDDAKTPDHFFKGFPCYWNITVFYMYIFNTSMIVNTVLLSLFCVLIFIPVKYVYPSRLDYLTESRVLKILMHCCSALYGISSFCLLVNYPETNKLWVSLSLGYVGMYLFLSFYRTYYPMFKAKITANNKD.

The Cytoplasmic segment spans residues 1–13 (MNPIKPPFTLNQY). Residues 14-34 (FAAWFVHVFTASAACIGVFSL) traverse the membrane as a helical segment. Residues 35–42 (YKIYQHDY) lie on the Periplasmic side of the membrane. Residues 43-63 (VFALWLMAITVFIDAVDGSLA) form a helical membrane-spanning segment. The Cytoplasmic segment spans residues 64–76 (RLVHVKSVLPKID). Residues 77–97 (GALLDNIVDYLNYVITPCFFL) traverse the membrane as a helical segment. Topologically, residues 98 to 103 (LVKPGM) are periplasmic. A helical transmembrane segment spans residues 104-124 (LPADYVVPITAAITITSAYQF). Topologically, residues 125 to 133 (CQDDAKTPD) are cytoplasmic. The helical transmembrane segment at 134-154 (HFFKGFPCYWNITVFYMYIFN) threads the bilayer. T155 is a topological domain (periplasmic). A helical transmembrane segment spans residues 156-175 (SMIVNTVLLSLFCVLIFIPV). Over 176–190 (KYVYPSRLDYLTESR) the chain is Cytoplasmic. Residues 191–211 (VLKILMHCCSALYGISSFCLL) form a helical membrane-spanning segment. At 212–217 (VNYPET) the chain is on the periplasmic side. The chain crosses the membrane as a helical span at residues 218-238 (NKLWVSLSLGYVGMYLFLSFY). Residues 239 to 255 (RTYYPMFKAKITANNKD) lie on the Cytoplasmic side of the membrane.

Belongs to the CDP-alcohol phosphatidyltransferase class-I family. The cofactor is Mn(2+).

It localises to the cell inner membrane. The enzyme catalyses a CDP-1,2-diacyl-sn-glycerol + choline = a 1,2-diacyl-sn-glycero-3-phosphocholine + CMP + H(+). Functionally, condenses choline with CDP-diglyceride to produce phosphatidylcholine and CMP. Affects virulence of this bacterium when there is a complete loss of phosphatidylcholine formation due to absence of both the synthase (pcs) and the methylation (pmtA) pathways. Reduced virulence results from lowered yields of bacteria within host macrophages and because of loss of high multiplicity cytotoxicity. This Legionella pneumophila subsp. pneumophila (strain Philadelphia 1 / ATCC 33152 / DSM 7513) protein is Phosphatidylcholine synthase.